A 2135-amino-acid polypeptide reads, in one-letter code: Plexin-B1 (2135 aa).

The first 19 residues, 1–19, serve as a signal peptide directing secretion; sequence MPALGPALLQALWAGWVLT. The 460-residue stretch at 20–479 folds into the Sema domain; sequence LQPLPPTAFT…TQSTLLKVPV (460 aa). The Extracellular portion of the chain corresponds to 20–1490; the sequence is LQPLPPTAFT…SPGAFPVAAQ (1471 aa). Asn-31 carries N-linked (GlcNAc...) asparagine glycosylation. Intrachain disulfides connect Cys-79–Cys-88, Cys-111–Cys-119, Cys-252–Cys-377, Cys-268–Cys-322, Cys-340–Cys-364, Cys-482–Cys-499, Cys-488–Cys-533, Cys-491–Cys-508, and Cys-502–Cys-514. Asn-334 is a glycosylation site (N-linked (GlcNAc...) asparagine). N-linked (GlcNAc...) asparagine glycosylation is present at Asn-543. Cys-570 and Cys-588 form a disulfide bridge. Disordered stretches follow at residues 671–829 and 849–884; these read MVAS…TTFP and LPEA…PPAP. The span at 681-697 shows a compositional bias: pro residues; sequence SPDPPARGGPSPSPPTA. Composition is skewed to low complexity over residues 698–710 and 734–754; these read PKAL…DTLP and SPWG…TGSP. IPT/TIG domains follow at residues 1070–1160, 1162–1249, and 1252–1375; these read PLIH…FAYQ, PKVH…FKYT, and PNIT…FSYE. Residues Asn-1183, Asn-1253, and Asn-1330 are each glycosylated (N-linked (GlcNAc...) asparagine). A helical transmembrane segment spans residues 1491 to 1511; sequence VGLGVGTSLLALGVIIIVLMY. A coiled-coil region spans residues 1507-1539; the sequence is IVLMYRRKSKQALRDYKKVQIQLENLESSVRDR. Topologically, residues 1512 to 2135 are cytoplasmic; it reads RRKSKQALRD…AAVENKVTDL (624 aa). The segment at 1883–1908 is disordered; it reads PWHLVKPSDEPEPPRPRRGSLRGGER. Residues 1888–1897 show a composition bias toward basic and acidic residues; the sequence is KPSDEPEPPR.

This sequence belongs to the plexin family. In terms of assembly, monomer, and heterodimer with PLXNB2 after proteolytic processing. Binds RAC1 that has been activated by GTP binding. Interaction with SEMA4D promotes binding of cytoplasmic ligands. Interacts with PLXNA1. Interacts with ARHGEF11 and ARHGEF12. Interacts with ERBB2. Interacts with MET. Interacts with MST1R. Interacts with RRAS. Interacts with RHOD. Interacts with RND1. Interacts with NRP1 and NRP2. Post-translationally, phosphorylated on tyrosine residues by ERBB2 and MET upon SEMA4D binding. Proteolytic processing favors heterodimerization with PLXNB2 and SEMA4D binding. Highly expressed in fetal kidney, and at slightly lower levels in fetal brain, lung and liver.

Its subcellular location is the cell membrane. The protein localises to the secreted. In terms of biological role, receptor for SEMA4D. Plays a role in GABAergic synapse development. Mediates SEMA4A- and SEMA4D-dependent inhibitory synapse development. Plays a role in RHOA activation and subsequent changes of the actin cytoskeleton. Plays a role in axon guidance, invasive growth and cell migration. This Homo sapiens (Human) protein is Plexin-B1 (PLXNB1).